A 132-amino-acid chain; its full sequence is Large ribosomal subunit protein uL24 (132 aa).

It belongs to the universal ribosomal protein uL24 family. Part of the 50S ribosomal subunit.

One of two assembly initiator proteins, it binds directly to the 5'-end of the 23S rRNA, where it nucleates assembly of the 50S subunit. In terms of biological role, one of the proteins that surrounds the polypeptide exit tunnel on the outside of the subunit. The chain is Large ribosomal subunit protein uL24 from Synechococcus sp. (strain JA-3-3Ab) (Cyanobacteria bacterium Yellowstone A-Prime).